A 101-amino-acid polypeptide reads, in one-letter code: Feather keratin Cos1-1/Cos1-3/Cos2-1 (101 aa).

At serine 2 the chain carries N-acetylserine.

The protein belongs to the avian keratin family. As to quaternary structure, the avian keratins (F-ker, S-ker, C-ker and B-ker) are a complex mixture of very similar polypeptides.

This is Feather keratin Cos1-1/Cos1-3/Cos2-1 from Columba livia (Rock dove).